We begin with the raw amino-acid sequence, 128 residues long: Holo-[acyl-carrier-protein] synthase (128 aa).

Positions 8 and 58 each coordinate Mg(2+).

Belongs to the P-Pant transferase superfamily. AcpS family. Requires Mg(2+) as cofactor.

It localises to the cytoplasm. It carries out the reaction apo-[ACP] + CoA = holo-[ACP] + adenosine 3',5'-bisphosphate + H(+). In terms of biological role, transfers the 4'-phosphopantetheine moiety from coenzyme A to a Ser of acyl-carrier-protein. The protein is Holo-[acyl-carrier-protein] synthase of Exiguobacterium sibiricum (strain DSM 17290 / CCUG 55495 / CIP 109462 / JCM 13490 / 255-15).